The sequence spans 935 residues: Probable mediator of RNA polymerase II transcription subunit 15c (935 aa).

A compositionally biased stretch (polar residues) spans M1–G13. Disordered regions lie at residues M1–Q28, N170–S190, S495–Q526, Q548–G611, and S635–P654. Positions M511–Q526 are enriched in low complexity. Polar residues-rich tracts occupy residues Q548–L577 and S635–T644.

It belongs to the plant Mediator complex subunit 15 family. Component of the Mediator complex.

The protein resides in the nucleus. In terms of biological role, component of the Mediator complex, a coactivator involved in the regulated transcription of nearly all RNA polymerase II-dependent genes. Mediator functions as a bridge to convey information from gene-specific regulatory proteins to the basal RNA polymerase II transcription machinery. The Mediator complex, having a compact conformation in its free form, is recruited to promoters by direct interactions with regulatory proteins and serves for the assembly of a functional preinitiation complex with RNA polymerase II and the general transcription factors. The protein is Probable mediator of RNA polymerase II transcription subunit 15c (MED15C) of Arabidopsis thaliana (Mouse-ear cress).